Consider the following 164-residue polypeptide: Succinate dehydrogenase assembly factor 3, mitochondrial (164 aa).

Residues 1 to 51 (MRPTLLRLANASGPLPLSVSQASVQLIPPIPLYRRLLRAHRLLPVDMRYMG) constitute a mitochondrion transit peptide. Over residues 136 to 145 (KSPEQIEREA) the composition is skewed to basic and acidic residues. The tract at residues 136–164 (KSPEQIEREANSAGVSPVNPNDPTTAGNS) is disordered. The segment covering 153–164 (VNPNDPTTAGNS) has biased composition (polar residues).

This sequence belongs to the complex I LYR family. SDHAF3 subfamily. In terms of assembly, interacts with the iron-sulfur protein subunit within the SDH catalytic dimer.

Its subcellular location is the mitochondrion matrix. In terms of biological role, plays an essential role in the assembly of succinate dehydrogenase (SDH), an enzyme complex (also referred to as respiratory complex II) that is a component of both the tricarboxylic acid (TCA) cycle and the mitochondrial electron transport chain, and which couples the oxidation of succinate to fumarate with the reduction of ubiquinone (coenzyme Q) to ubiquinol. Promotes maturation of the iron-sulfur protein subunit of the SDH catalytic dimer, protecting it from the deleterious effects of oxidants. May act together with SDHAF1. The protein is Succinate dehydrogenase assembly factor 3, mitochondrial of Cryptococcus neoformans var. neoformans serotype D (strain B-3501A) (Filobasidiella neoformans).